The following is a 156-amino-acid chain: 6,7-dimethyl-8-ribityllumazine synthase (156 aa).

5-amino-6-(D-ribitylamino)uracil contacts are provided by residues phenylalanine 23, 57–59 (AYE), and 81–83 (AII). (2S)-2-hydroxy-3-oxobutyl phosphate is bound at residue 86-87 (GT). Residue histidine 89 is the Proton donor of the active site. Phenylalanine 114 lines the 5-amino-6-(D-ribitylamino)uracil pocket. Residue arginine 128 participates in (2S)-2-hydroxy-3-oxobutyl phosphate binding.

This sequence belongs to the DMRL synthase family.

It carries out the reaction (2S)-2-hydroxy-3-oxobutyl phosphate + 5-amino-6-(D-ribitylamino)uracil = 6,7-dimethyl-8-(1-D-ribityl)lumazine + phosphate + 2 H2O + H(+). It functions in the pathway cofactor biosynthesis; riboflavin biosynthesis; riboflavin from 2-hydroxy-3-oxobutyl phosphate and 5-amino-6-(D-ribitylamino)uracil: step 1/2. Catalyzes the formation of 6,7-dimethyl-8-ribityllumazine by condensation of 5-amino-6-(D-ribitylamino)uracil with 3,4-dihydroxy-2-butanone 4-phosphate. This is the penultimate step in the biosynthesis of riboflavin. This chain is 6,7-dimethyl-8-ribityllumazine synthase, found in Helicobacter pylori (strain Shi470).